The primary structure comprises 364 residues: Molybdenum import ATP-binding protein ModC (364 aa).

The region spanning 1–229 is the ABC transporter domain; the sequence is MLLIDIKKQL…PLMRPWLNAS (229 aa). 31 to 38 is an ATP binding site; that stretch reads GRSGAGKS. Positions 293–360 constitute a Mop domain; the sequence is HSSIRNILPV…IKGVSVTQSD (68 aa).

The protein belongs to the ABC transporter superfamily. Molybdate importer (TC 3.A.1.8) family. As to quaternary structure, the complex is composed of two ATP-binding proteins (ModC), two transmembrane proteins (ModB) and a solute-binding protein (ModA).

Its subcellular location is the cell inner membrane. It catalyses the reaction molybdate(out) + ATP + H2O = molybdate(in) + ADP + phosphate + H(+). Part of the ABC transporter complex ModABC involved in molybdenum import. Responsible for energy coupling to the transport system. This is Molybdenum import ATP-binding protein ModC from Aliivibrio fischeri (strain ATCC 700601 / ES114) (Vibrio fischeri).